Here is a 460-residue protein sequence, read N- to C-terminus: Serine incorporator 5 (460 aa).

The Extracellular segment spans residues 1–36 (MCTPCCVSQLACCCGSAACSLCCGCCPKIKQSTSTR). A helical transmembrane segment spans residues 37–57 (FMYALFFMLVTVTCVIMMSPT). Residues 58–89 (VEMAMREHIPFYSQMCQQLNAGENCSTLVGYS) are Cytoplasmic-facing. The helical transmembrane segment at 90 to 110 (AVYKVCFGMACFFFFFAVFTI) threads the bilayer. Residues 111–124 (RVQNSTGCRAAVHN) are Extracellular-facing. Asparagine 114 carries an N-linked (GlcNAc...) asparagine glycan. Residues 125 to 145 (GFWFFKFVALLACCAGGFFLP) traverse the membrane as a helical segment. The Cytoplasmic portion of the chain corresponds to 146 to 156 (NQDQFLEVWRY). The helical transmembrane segment at 157 to 177 (VGAAGGFLFIIIQLMLLVQFA) threads the bilayer. Topologically, residues 178-197 (HRWNQNWSSGATYNKLWYAA) are extracellular. Asparagine 183 carries N-linked (GlcNAc...) asparagine glycosylation. The helical transmembrane segment at 198-218 (LALVTLVLFSVAVGGMVFMFM) threads the bilayer. Over 219–230 (YYTHPEACFLNK) the chain is Cytoplasmic. A helical transmembrane segment spans residues 231–251 (IFLGVNGGLCFIVSLLAISPC). The Extracellular segment spans residues 252–259 (IQTFQPTS). The chain crosses the membrane as a helical span at residues 260–280 (GLLQPAVITLYVMYLTFSALA). Residues 281 to 311 (SKPIEMVEDEIKGNITVCVFPFKSGLKSDTN) lie on the Cytoplasmic side of the membrane. Residues 312–332 (IVTGVGTAILFCCILYSCLIS) traverse the membrane as a helical segment. Residues 333–391 (TTKRSSAALQVYRNDMPENERARCCFCWVDDTEDYDDEKTSGGQNVKYDERDGTVYSYC) lie on the Extracellular side of the membrane. A helical transmembrane segment spans residues 392-412 (FFHFVFFLGSLYVMMTVTNWF). Residues 413–433 (HYDNAKIERLLEGSWSVFWIK) lie on the Cytoplasmic side of the membrane. A helical transmembrane segment spans residues 434-454 (MASSWVCLFFYMWTLVVPMLF). Topologically, residues 455–460 (PQRFQA) are extracellular.

It belongs to the TDE1 family.

It is found in the cell membrane. The catalysed reaction is a 1,2-diacyl-sn-glycero-3-phospho-L-serine(in) = a 1,2-diacyl-sn-glycero-3-phospho-L-serine(out). It carries out the reaction a 1,2-diacyl-sn-glycero-3-phosphocholine(in) = a 1,2-diacyl-sn-glycero-3-phosphocholine(out). It catalyses the reaction a 1,2-diacyl-sn-glycero-3-phosphoethanolamine(in) = a 1,2-diacyl-sn-glycero-3-phosphoethanolamine(out). Restriction factor required to restrict infectivity of gammaretroviruses: acts by inhibiting an early step of viral infection. Impairs the penetration of the viral particle into the cytoplasm. Non-ATP-dependent, non-specific lipid transporter for phosphatidylserine, phosphatidylcholine, and phosphatidylethanolamine. Functions as a scramblase that flips lipids in both directions across the membrane. Phospholipid scrambling results in gammaretroviral surface exposure of phosphatidylserine and loss of membrane asymmetry, which leads to loss of infectivity. Enhances the incorporation of serine into phosphatidylserine and sphingolipids. The protein is Serine incorporator 5 (serinc5) of Danio rerio (Zebrafish).